Here is a 419-residue protein sequence, read N- to C-terminus: Hyaluronan synthase (419 aa).

Transmembrane regions (helical) follow at residues 8 to 28, 33 to 53, 318 to 338, 345 to 365, and 376 to 396; these read LIVLSFICLISILIYLNMYLF, VGIYGVILITYLVIKLGLSFL, IVALWTIFEVVMFMMLIVAIG, AIQLDLIKLFAFLSIIFIVAL, and PASFLLSPLYGILHLFVLQPL.

This sequence belongs to the NodC/HAS family. The cofactor is Mg(2+).

It is found in the cell membrane. It catalyses the reaction [hyaluronan](n) + UDP-N-acetyl-alpha-D-glucosamine = N-acetyl-beta-D-glucosaminyl-(1-&gt;4)-[hyaluronan](n) + UDP + H(+). The catalysed reaction is N-acetyl-beta-D-glucosaminyl-(1-&gt;4)-[hyaluronan](n) + UDP-alpha-D-glucuronate = [hyaluronan](n+1) + UDP + H(+). Its pathway is glycan biosynthesis; hyaluronan biosynthesis. Functionally, glycosaminoglycan synthesis. The hyaluronic acid capsule is involved in the pathogenicity of group A Streptococci; it may be the major virulence determinant. This Streptococcus pyogenes serotype M3 (strain ATCC BAA-595 / MGAS315) protein is Hyaluronan synthase (hasA).